The chain runs to 36 residues: Tddefensin (36 aa).

3 disulfides stabilise this stretch: C3-C24, C10-C32, and C14-C34.

It belongs to the invertebrate defensin family. Expressed by the venom gland.

The protein localises to the secreted. Its function is as follows. Antibacterial peptide mostly active against Gram-positive bacteria. The protein is Tddefensin of Tityus discrepans (Venezuelan scorpion).